Reading from the N-terminus, the 130-residue chain is Small ribosomal subunit protein uS8 (130 aa).

This sequence belongs to the universal ribosomal protein uS8 family. As to quaternary structure, part of the 30S ribosomal subunit. Contacts proteins S5 and S12.

Its function is as follows. One of the primary rRNA binding proteins, it binds directly to 16S rRNA central domain where it helps coordinate assembly of the platform of the 30S subunit. The polypeptide is Small ribosomal subunit protein uS8 (Pasteurella multocida (strain Pm70)).